The sequence spans 307 residues: Dihydroorotate dehydrogenase A (fumarate) (307 aa).

Residues Ser-21 and Lys-46 to Thr-47 contribute to the FMN site. Substrate-binding positions include Lys-46, Asn-70 to Leu-74, and Asn-130. Asn-130 provides a ligand contact to FMN. Catalysis depends on Cys-133, which acts as the Nucleophile. FMN contacts are provided by Lys-168 and Ile-194. Asn-195 to Thr-196 serves as a coordination point for substrate. FMN-binding positions include Gly-220, Gly-246–Gly-247, and Gly-268–Ser-269.

It belongs to the dihydroorotate dehydrogenase family. Type 1 subfamily. In terms of assembly, homodimer. FMN serves as cofactor.

The protein localises to the cytoplasm. The enzyme catalyses (S)-dihydroorotate + fumarate = orotate + succinate. The protein operates within pyrimidine metabolism; UMP biosynthesis via de novo pathway. Catalyzes the conversion of dihydroorotate to orotate with fumarate as the electron acceptor. This chain is Dihydroorotate dehydrogenase A (fumarate) (pyrD), found in Lactobacillus helveticus (strain DPC 4571).